The chain runs to 400 residues: Enoyl-[acyl-carrier-protein] reductase [NADH] (400 aa).

NAD(+) contacts are provided by residues 48–53 (GSSSGY), 74–75 (FE), 111–112 (DA), and 139–140 (LA). Y225 provides a ligand contact to substrate. Y235 acts as the Proton donor in catalysis. NAD(+)-binding positions include K244 and 273–275 (VVT).

This sequence belongs to the TER reductase family. Monomer.

The catalysed reaction is a 2,3-saturated acyl-[ACP] + NAD(+) = a (2E)-enoyl-[ACP] + NADH + H(+). It participates in lipid metabolism; fatty acid biosynthesis. Functionally, involved in the final reduction of the elongation cycle of fatty acid synthesis (FAS II). Catalyzes the reduction of a carbon-carbon double bond in an enoyl moiety that is covalently linked to an acyl carrier protein (ACP). In Shewanella pealeana (strain ATCC 700345 / ANG-SQ1), this protein is Enoyl-[acyl-carrier-protein] reductase [NADH].